A 424-amino-acid polypeptide reads, in one-letter code: MNLLIQGGRVIDPSQGIDEVLDILVENGAVKELGKGVKAPSGTETIDASGLIVTPGLIDMHVHLRDPGHEYKEDIVSGTKAAAAGGFTSVACMPNTKPVNDNKAVTSYIIAKAKAEGSVNVFPVGSITQGSKGELLSEMGELKESGCVAVSDDGHPVTNSELMRRALEYAKGMGIMVISHAEDLSLVGAGVMNEGFVSTELGLKGIPWAAEDAATARDVYLAEFTDSPLHIAHVSTKGSLRIIRNAKARGVKVTCETAPHYFSLTDDAVRGYDTNAKMNPPLRTADDVTAVKEALKDGTIDAIATDHAPHHIDEKDLEFNEALNGIVGLETSLTLSLRLVEEGVLTLPVLVDKMACNPAKILGIDRGTLKPGSVADITVIDPKATWTVDADKLASKSKNSPFLGWEVKGAAAFTIVGGKVVYKR.

The Zn(2+) site is built by His61 and His63. Residues 63 to 65 (HLR) and Asn95 each bind substrate. The Zn(2+) site is built by Asp153, His180, and His233. Asn279 contributes to the substrate binding site. Asp306 contributes to the Zn(2+) binding site. The active site involves Asp306. Residue His310 participates in substrate binding.

The protein belongs to the metallo-dependent hydrolases superfamily. DHOase family. Class I DHOase subfamily. It depends on Zn(2+) as a cofactor.

It catalyses the reaction (S)-dihydroorotate + H2O = N-carbamoyl-L-aspartate + H(+). It functions in the pathway pyrimidine metabolism; UMP biosynthesis via de novo pathway; (S)-dihydroorotate from bicarbonate: step 3/3. In terms of biological role, catalyzes the reversible cyclization of carbamoyl aspartate to dihydroorotate. This chain is Dihydroorotase, found in Geobacter metallireducens (strain ATCC 53774 / DSM 7210 / GS-15).